The sequence spans 651 residues: MSEPLLQLTGISRSFTAGDREFLALKNIDLTIHAGEMVAIIGASGSGKSTLMNILGCLDYATAGSYRINGRETRDLDNQALAELRRDYFGFIFQRYHLLPHLSAVHNVEMPAIYAGTPEPQRHARARELLARLGLEGHLTHRPSQLSGGQQQRVSIARALMNGGEVILADEPTGALDTTSGKEVMRILLELHAAGHTVILVTHDPKVAANAERIIEVSDGEILSDRRNERDTAALSNEDAVPKSTAARRLVASLGLFKEAFNMAWVALISHRMRTLLTMLGIVIGITSVVSISAIGEGAKRYVLKDIQAIGSNTIDIYSGTSFGDSRSAAIETLVPADVTALNQLYYVDSATPVVGRNLLLRYRNIDLDAQVNGVSDLYFQVRGIKMESGIPFSESDARRQAQVVVIDHNTRHRLFGEGVDPLGQVILIGNLPCTVIGVAAENKNIFSSSKSLNVWVPYETAAGRLLGQRYLDSISVRIKDGQPSKVVEDNVNKLMLQRHGTKDFFTNNLDSVMQTVQKTSRSLALLLSLIAVISLVVGGIGVMNIMLVSVTERTREIGIRMAVGARQSDIRQQFLVEAVMVCLLGGAIGISLSYAIGHLFSLFIKEWEMVFSLTSVLTAVICSTLIGIVFGFVPARNASRLDPIEALARD.

In terms of domain architecture, ABC transporter spans 6–244; sequence LQLTGISRSF…LSNEDAVPKS (239 aa). Position 42–49 (42–49) interacts with ATP; the sequence is GASGSGKS. 5 helical membrane-spanning segments follow: residues 250-270, 276-296, 524-544, 585-605, and 614-634; these read LVASLGLFKEAFNMAWVALIS, LLTMLGIVIGITSVVSISAIG, LALLLSLIAVISLVVGGIGVM, LGGAIGISLSYAIGHLFSLFI, and LTSVLTAVICSTLIGIVFGFV.

It belongs to the ABC transporter superfamily. Macrolide exporter (TC 3.A.1.122) family. In terms of assembly, probably part of a tripartite efflux system, which is composed of an inner membrane transporter, a periplasmic membrane fusion protein, and an outer membrane component.

It localises to the cell inner membrane. Its function is as follows. Probably part of a tripartite efflux system. In Pseudomonas fluorescens (strain Pf0-1), this protein is Probable export ATP-binding/permease protein Pfl01_2215.